The following is a 1107-amino-acid chain: MLITFVVDTSGSMSQKTTNGMTLLDCSKAAIEHFIKIRSKDASMRNDRFFLITSEENPITAVKIGWKDNFNSFIQEVKNLQTKDMSNLGFSLQKSFDFLNQFRVQSSIDNYGQGRNPWFIEPAIIILLTDGSSLTNSSSIIENFTLPKTQFHLNSDPTSEPFRWDQRLFSIVLKFGGISSNKSLPLPMEPAIAPMCDVTGGRCQVATNMKTMIQQVEGLMQKLQGGVVVSFEPLVNQQQAQAQAQQLLPPPPLSLHKMLYVRQQVGFWPIPEGYYPDITSLSLPMRLAHPVIRYSIIEADTHIPENFPFDKYELEPCPLTQYLLTNKIQCTHVFMMNSLQVSGQGEPFGCLRLNSAGNSVNLFVFPYNFPRLWILLEDLTTTFKMMPSQKWKQEFEGYLLSIPPYYINPLRGALKRFCSLNLIPDNIDSQFINFINNTIKKIKSQSISKMESERIINSKQQQQQQQQFSHQQQFQQFQQKQAQQYDSSPSSPSSSPSSSSSNTSGIGSSSGSGNLATKKKSFHQILDQGYSSDILSELIQQDNETSENSELSQELSESSTTGSSGGGSSSNINILQRNVFDIGRVQLLNQLDKMKDHIFKKKIQKDESKHHLPISQMGNYHETIGKRETLRDIDDDKKPNTPLFGNPYRKEKSNQRYMSIDEADEGGNLTSDGEGKNKLTPNKRRRLSGRGYPSLPTLNSLSNTSTTTSTTTTTTTTTPATSTNTTITSSSSSSSSSSSSSSSSSSSSSSSSSSSSSSSSSSSSTITSSPPTTSTNPLLQPTTASITTSTVPIPSTTVSSPITNTSIITTNIHIQPTQISSPPPLSSSLAINQPTQTSSVISSSSSPPPPPPPPPLPIVNNNNVIPSSLVQVTNNNNNIPTVPVNNISPPTSTISSPNNQHLLPTPPNINNTSISTTNVPNISTTTSNESIISQPISPTHKNIAGVVRPFRPNSPPLTIDTLTSSSSSSTIPTTTNGSLSTHDTPNTSPTLSSINYNNNNNNNNNNNNNNNNNNNNNNNNNNRKNSIITTTTPNNETNNIIKFVHKEIRRPTKDNHDIIIQQLSKLFSILSDGNLRLKLLKDTINLAKEYKKSSLISKLIGYIDQIK.

Positions 2 to 195 constitute a VWFA domain; sequence LITFVVDTSG…LPMEPAIAPM (194 aa). Disordered regions lie at residues 454–515, 542–572, 629–801, 818–861, and 946–1034; these read RIIN…SGNL, DNET…SSNI, TLRD…VSSP, QISS…IVNN, and VVRP…TTPN. Composition is skewed to low complexity over residues 460-513 and 546-562; these read QQQQ…SGSG and SENS…STTG. Residues 629–639 show a composition bias toward basic and acidic residues; it reads TLRDIDDDKKP. Positions 693–801 are enriched in low complexity; that stretch reads PSLPTLNSLS…PIPSTTVSSP (109 aa). Pro residues predominate over residues 846–857; that stretch reads SPPPPPPPPPLP. Low complexity predominate over residues 956 to 975; sequence PLTIDTLTSSSSSSTIPTTT. A compositionally biased stretch (polar residues) spans 976–996; it reads NGSLSTHDTPNTSPTLSSINY. A compositionally biased stretch (low complexity) spans 997–1034; that stretch reads NNNNNNNNNNNNNNNNNNNNNNNNNNRKNSIITTTTPN. One can recognise an MIF4G domain in the interval 1041–1103; that stretch reads IKFVHKEIRR…SLISKLIGYI (63 aa).

The protein belongs to the Integrator subunit 6 family. As to quaternary structure, component of the Integrator complex. The core complex associates with protein phosphatase 2A subunits, to form the Integrator-PP2A (INTAC) complex.

Its subcellular location is the nucleus. The protein localises to the chromosome. In terms of biological role, component of the integrator complex, a multiprotein complex that terminates RNA polymerase II (Pol II) transcription in the promoter-proximal region of genes. The integrator complex provides a quality checkpoint during transcription elongation by driving premature transcription termination of transcripts that are unfavorably configured for transcriptional elongation: the complex terminates transcription by (1) catalyzing dephosphorylation of the C-terminal domain (CTD) of Pol II subunit polr2a, (2) degrading the exiting nascent RNA transcript via endonuclease activity and (3) promoting the release of Pol II from bound DNA. The integrator complex is also involved in terminating the synthesis of non-coding Pol II transcripts, such as enhancer RNAs (eRNAs), small nuclear RNAs (snRNAs), telomerase RNAs and long non-coding RNAs (lncRNAs). Within the integrator complex, INTS6 acts as a molecular adapter that promotes assembly of protein phosphatase 2A (PP2A) subunits to the integrator core complex, promoting recruitment of PP2A to transcription pause-release checkpoint. This is Integrator complex subunit 6 homolog (ints6) from Dictyostelium discoideum (Social amoeba).